The following is a 275-amino-acid chain: Acetyl-coenzyme A carboxylase carboxyl transferase subunit beta (275 aa).

Positions 18 to 275 (KDNAGPAVPS…IHRLGGEMHA (258 aa)) constitute a CoA carboxyltransferase N-terminal domain. The disordered stretch occupies residues 23 to 47 (PAVPSNTHSSKSNGNPVSEMKENKR). The span at 26–38 (PSNTHSSKSNGNP) shows a compositional bias: polar residues.

This sequence belongs to the AccD/PCCB family. As to quaternary structure, acetyl-CoA carboxylase is a heterohexamer composed of biotin carboxyl carrier protein (AccB), biotin carboxylase (AccC) and two subunits each of ACCase subunit alpha (AccA) and ACCase subunit beta (AccD).

The protein localises to the cytoplasm. The enzyme catalyses N(6)-carboxybiotinyl-L-lysyl-[protein] + acetyl-CoA = N(6)-biotinyl-L-lysyl-[protein] + malonyl-CoA. It participates in lipid metabolism; malonyl-CoA biosynthesis; malonyl-CoA from acetyl-CoA: step 1/1. Functionally, component of the acetyl coenzyme A carboxylase (ACC) complex. Biotin carboxylase (BC) catalyzes the carboxylation of biotin on its carrier protein (BCCP) and then the CO(2) group is transferred by the transcarboxylase to acetyl-CoA to form malonyl-CoA. This is Acetyl-coenzyme A carboxylase carboxyl transferase subunit beta from Alkaliphilus oremlandii (strain OhILAs) (Clostridium oremlandii (strain OhILAs)).